Here is a 1922-residue protein sequence, read N- to C-terminus: Endoribonuclease Dicer (1922 aa).

Residues 51–227 (LLEAALDHNT…ELEEKIQKLE (177 aa)) form the Helicase ATP-binding domain. 64–71 (LNTGSGKT) provides a ligand contact to ATP. The short motif at 175-178 (DECH) is the DECH box element. Positions 256 to 595 (DCGPFTDRSG…LRNKCSKSVD (340 aa)) are required for interaction with PRKRA and TARBP2. Positions 409–433 (YVSWSDSEDDDEDEEIEEKEKPETN) are disordered. S413 and S415 each carry phosphoserine. Over residues 414–425 (DSEDDDEDEEIE) the composition is skewed to acidic residues. Residues 433 to 602 (NFPSPFTNIL…SVDTGETDID (170 aa)) form the Helicase C-terminal domain. The Dicer dsRNA-binding fold domain maps to 630 to 722 (AIGHINRYCA…MPVGKETVKY (93 aa)). The 148-residue stretch at 895–1042 (KFMEDIEKSE…LVPELCAIHP (148 aa)) folds into the PAZ domain. 2 positions are modified to phosphoserine: S1016 and S1160. In terms of domain architecture, RNase III 1 spans 1276–1403 (DSEQSPSIGY…TDKWEKDEMT (128 aa)). Positions 1316, 1395, and 1398 each coordinate Mg(2+). 3 positions are modified to phosphoserine: S1460, S1468, and S1470. Residues 1666–1824 (FENFEKKINY…LAGAIYMDSG (159 aa)) enclose the RNase III 2 domain. Mg(2+) contacts are provided by E1705, D1810, and E1813. One can recognise a DRBM domain in the interval 1849 to 1914 (VPRSPVRELL…ARRALRSLKA (66 aa)). S1868 carries the post-translational modification Phosphoserine.

Belongs to the helicase family. Dicer subfamily. In terms of assembly, component of the RISC loading complex (RLC), or micro-RNA (miRNA) loading complex (miRLC), which is composed of DICER1, AGO2 and TARBP2; DICER1 and TARBP2 are required to process precursor miRNAs (pre-miRNAs) to mature miRNAs and then load them onto AGO2. Note that the trimeric RLC/miRLC is also referred to as RISC. Interacts with DHX9, AGO1, PIWIL1 and PRKRA. Associates with the 60S ribosome. Interacts with BCDIN3D. Interacts with AGO2, TARBP2, EIF6, MOV10 and RPL7A (60S ribosome subunit); they form a large RNA-induced silencing complex (RISC). Interacts (via Dicer dsRNA-binding fold domain) with ALOX5 (via PLAT domain); this interaction enhances arachidonate 5-lipoxygenase activity and modifies the miRNA precursor processing activity of DICER1. (Microbial infection) Interacts with ebolavirus transcriptional activator VP30; this interaction prevents TARBP2/TRBP binding to DICER1 and thus allows the virus to counteract host RNA silencing. As to quaternary structure, (Microbial infection) Interacts with ebolavirus transcriptional activator VP35; this interaction prevents TARBP2/TRBP binding to DICER1 and thus allows the virus to counteract host RNA silencing. The cofactor is Mg(2+). It depends on Mn(2+) as a cofactor.

The protein localises to the cytoplasm. It localises to the perinuclear region. The enzyme catalyses Endonucleolytic cleavage to 5'-phosphomonoester.. Double-stranded RNA (dsRNA) endoribonuclease playing a central role in short dsRNA-mediated post-transcriptional gene silencing. Cleaves naturally occurring long dsRNAs and short hairpin pre-microRNAs (miRNA) into fragments of twenty-one to twenty-three nucleotides with 3' overhang of two nucleotides, producing respectively short interfering RNAs (siRNA) and mature microRNAs. SiRNAs and miRNAs serve as guide to direct the RNA-induced silencing complex (RISC) to complementary RNAs to degrade them or prevent their translation. Gene silencing mediated by siRNAs, also called RNA interference, controls the elimination of transcripts from mobile and repetitive DNA elements of the genome but also the degradation of exogenous RNA of viral origin for instance. The miRNA pathway on the other side is a mean to specifically regulate the expression of target genes. In Homo sapiens (Human), this protein is Endoribonuclease Dicer (DICER1).